A 184-amino-acid polypeptide reads, in one-letter code: UPF0149 protein PSPA7_5968 (184 aa).

This sequence belongs to the UPF0149 family.

The sequence is that of UPF0149 protein PSPA7_5968 from Pseudomonas paraeruginosa (strain DSM 24068 / PA7) (Pseudomonas aeruginosa (strain PA7)).